The sequence spans 492 residues: PTS system N-acetylmuramic acid-specific EIIBC component (492 aa).

Residues 1-89 (MAKINQSVIA…NELLNSSTPT (89 aa)) form the PTS EIIB type-1 domain. Catalysis depends on Cys-28, which acts as the Phosphocysteine intermediate; for EIIB activity. The 365-residue stretch at 123-487 (TKFATIFTPL…KKIEVLKADV (365 aa)) folds into the PTS EIIC type-1 domain. 10 helical membrane-spanning segments follow: residues 125–145 (FATI…LLGF), 167–187 (IIGY…ILIG), 193–213 (AFGG…LSYN), 227–247 (FFGY…AAIL), 265–285 (MILT…IFIM), 311–331 (ILAG…FVPV), 344–364 (LFPI…ALYV), 378–398 (GAII…VTLP), 403–423 (FITA…IAYL), and 450–470 (IFVG…SGFV).

It is found in the cell inner membrane. It catalyses the reaction N-acetyl-beta-D-muramate(out) + N(pros)-phospho-L-histidyl-[protein] = N-acetyl-beta-D-muramate 6-phosphate(in) + L-histidyl-[protein]. Its function is as follows. The phosphoenolpyruvate-dependent sugar phosphotransferase system (sugar PTS), a major carbohydrate active transport system, catalyzes the phosphorylation of incoming sugar substrates concomitantly with their translocation across the cell membrane. This system is involved in N-acetylmuramic acid (MurNAc) transport, yielding cytoplasmic MurNAc-6-P. Is also able to take up anhydro-N-acetylmuramic acid (anhMurNAc), but cannot phosphorylate the carbon 6, probably because of the 1,6-anhydro ring. The chain is PTS system N-acetylmuramic acid-specific EIIBC component (murP) from Photorhabdus laumondii subsp. laumondii (strain DSM 15139 / CIP 105565 / TT01) (Photorhabdus luminescens subsp. laumondii).